Reading from the N-terminus, the 65-residue chain is DNA gyrase inhibitor YacG (65 aa).

Zn(2+) is bound by residues C9, C12, C28, and C32. A disordered region spans residues E44–Q65. A compositionally biased stretch (acidic residues) spans S54–Q65.

It belongs to the DNA gyrase inhibitor YacG family. Interacts with GyrB. It depends on Zn(2+) as a cofactor.

Inhibits all the catalytic activities of DNA gyrase by preventing its interaction with DNA. Acts by binding directly to the C-terminal domain of GyrB, which probably disrupts DNA binding by the gyrase. This chain is DNA gyrase inhibitor YacG, found in Escherichia coli O6:H1 (strain CFT073 / ATCC 700928 / UPEC).